The following is a 284-amino-acid chain: uncharacterized protein (284 aa).

Residues 1-21 (MKTTMLMLVLLVCSYIHYVCA) form the signal peptide. Transmembrane regions (helical) follow at residues 88 to 108 (AGPFAISQVFGPAGRLYFLWA), 144 to 164 (ALGVYPYVPTLTGFSTFLGVW), and 212 to 232 (VFTTFAGPPIATSTVFASPTY).

Its subcellular location is the membrane. This is an uncharacterized protein from Schizosaccharomyces pombe (strain 972 / ATCC 24843) (Fission yeast).